A 73-amino-acid chain; its full sequence is uncharacterized protein (73 aa).

This is an uncharacterized protein from Dictyostelium discoideum (Social amoeba).